We begin with the raw amino-acid sequence, 360 residues long: UDP-N-acetylglucosamine--N-acetylmuramyl-(pentapeptide) pyrophosphoryl-undecaprenol N-acetylglucosamine transferase (360 aa).

UDP-N-acetyl-alpha-D-glucosamine is bound by residues 12–14, Asn124, Arg161, Ser189, Ile243, and Gln288; that span reads TGG.

This sequence belongs to the glycosyltransferase 28 family. MurG subfamily.

The protein resides in the cell inner membrane. It catalyses the reaction di-trans,octa-cis-undecaprenyl diphospho-N-acetyl-alpha-D-muramoyl-L-alanyl-D-glutamyl-meso-2,6-diaminopimeloyl-D-alanyl-D-alanine + UDP-N-acetyl-alpha-D-glucosamine = di-trans,octa-cis-undecaprenyl diphospho-[N-acetyl-alpha-D-glucosaminyl-(1-&gt;4)]-N-acetyl-alpha-D-muramoyl-L-alanyl-D-glutamyl-meso-2,6-diaminopimeloyl-D-alanyl-D-alanine + UDP + H(+). It participates in cell wall biogenesis; peptidoglycan biosynthesis. In terms of biological role, cell wall formation. Catalyzes the transfer of a GlcNAc subunit on undecaprenyl-pyrophosphoryl-MurNAc-pentapeptide (lipid intermediate I) to form undecaprenyl-pyrophosphoryl-MurNAc-(pentapeptide)GlcNAc (lipid intermediate II). This chain is UDP-N-acetylglucosamine--N-acetylmuramyl-(pentapeptide) pyrophosphoryl-undecaprenol N-acetylglucosamine transferase, found in Acidithiobacillus ferrooxidans (strain ATCC 23270 / DSM 14882 / CIP 104768 / NCIMB 8455) (Ferrobacillus ferrooxidans (strain ATCC 23270)).